The primary structure comprises 159 residues: Small ribosomal subunit protein uS4 (159 aa).

The S4 RNA-binding domain maps to R106–I158.

Belongs to the universal ribosomal protein uS4 family. In terms of assembly, part of the 30S ribosomal subunit. Contacts protein S5. The interaction surface between S4 and S5 is involved in control of translational fidelity.

Functionally, one of the primary rRNA binding proteins, it binds directly to 16S rRNA where it nucleates assembly of the body of the 30S subunit. In terms of biological role, with S5 and S12 plays an important role in translational accuracy. This chain is Small ribosomal subunit protein uS4, found in Pyrobaculum islandicum (strain DSM 4184 / JCM 9189 / GEO3).